Reading from the N-terminus, the 316-residue chain is Olfactory receptor 8J1 (316 aa).

The Extracellular portion of the chain corresponds to 1-25 (MAPENFTRVTEFILTGVSSCPELQI). N5 carries an N-linked (GlcNAc...) asparagine glycan. A helical transmembrane segment spans residues 26 to 46 (PLFLVFLVLYGLTMAGNLGII). Residues 47–54 (TLTSVDSR) lie on the Cytoplasmic side of the membrane. Residues 55 to 75 (LQTPMYFFLQHLALINLGNST) form a helical membrane-spanning segment. Residues 76-99 (VIAPKMLINFLVKKKTTSFYECAT) lie on the Extracellular side of the membrane. C97 and C189 are disulfide-bonded. A helical membrane pass occupies residues 100–120 (QLGGFLFFIVSEVIMLALMAY). Residues 121–139 (DRYVAICNPLLYMVVVSRR) lie on the Cytoplasmic side of the membrane. A helical transmembrane segment spans residues 140–160 (LCLLLVSLTYLYGFSTAIVVS). Residues 161–197 (SYVFSVSYCSSNIINHFYCDNVPLLALSCSDTYLPET) are Extracellular-facing. The helical transmembrane segment at 198–217 (VVFISAATNVVGSLIIVLVS) threads the bilayer. At 218-237 (YFNIVLSILKICSSEGRKKA) the chain is on the cytoplasmic side. Residues 238 to 258 (FSTCASHMMAVTIFYGTLLFM) form a helical membrane-spanning segment. The Extracellular segment spans residues 259–272 (YVQPRSNHSLDTDD). A helical transmembrane segment spans residues 273-293 (KMASVFYTLVIPMLNPLIYSL). Residues 294–316 (RNKDVKTALQRFMTNLCYSFKTM) are Cytoplasmic-facing.

It belongs to the G-protein coupled receptor 1 family.

It localises to the cell membrane. In terms of biological role, odorant receptor. This Homo sapiens (Human) protein is Olfactory receptor 8J1 (OR8J1).